A 195-amino-acid polypeptide reads, in one-letter code: PBAN-type neuropeptides (195 aa).

The N-terminal stretch at 1–33 (MIGFAVFSSFNRFTTIFVCVLLCVVYLLSYASG) is a signal peptide. The propeptide occupies 34–63 (EYDGRDSSSGSNNDRAPSNEFGSCTDGKCI). Leu80 carries the leucine amide modification. Positions 86 to 117 (ADRKPEINSDIEAFANAFEEPHWAIVTIPETE) are excised as a propeptide. Gln120 is modified (pyrrolidone carboxylic acid). Position 128 is a leucine amide (Leu128). A propeptide spanning residues 131 to 153 (ESGEDYFSYGFPKDQEELYTEEQ) is cleaved from the precursor. Leu163 and Leu175 each carry leucine amide. The propeptide occupies 178–195 (QLHNIVDKPRQNFNDPRF).

The protein belongs to the pyrokinin family.

It localises to the secreted. A hormone that controls sex pheromone production in females and pheromone responsiveness in male. Also mediates visceral muscle contractile activity (myotropic activity). The protein is PBAN-type neuropeptides of Apis mellifera (Honeybee).